The following is a 207-amino-acid chain: MIHIINHPLIEIKLTVMRDEKTNHKDFKANLNEISSLMVYEILRDYKAKDFQVKTSTGSLANGKIFDKEIVIVPILRAGLGMTDGISNLVPQARIGHIGLYRDEKTFEAKEYFYKIPDVKKDSLILVVDPMLATGGSANDAIKSLKKRGFSNIKLVCLVGVKDGIDLIEKNHPDVNVYLAAKDDHLDKNKYIIPGLGDAGDRIFGTK.

5-phospho-alpha-D-ribose 1-diphosphate contacts are provided by residues Arg77, Arg102, and 129 to 137 (DPMLATGGS). Residues Ile192 and 197 to 199 (GDA) each bind uracil. Asp198 contributes to the 5-phospho-alpha-D-ribose 1-diphosphate binding site.

This sequence belongs to the UPRTase family. Mg(2+) serves as cofactor.

It carries out the reaction UMP + diphosphate = 5-phospho-alpha-D-ribose 1-diphosphate + uracil. It participates in pyrimidine metabolism; UMP biosynthesis via salvage pathway; UMP from uracil: step 1/1. Allosterically activated by GTP. In terms of biological role, catalyzes the conversion of uracil and 5-phospho-alpha-D-ribose 1-diphosphate (PRPP) to UMP and diphosphate. In Mycoplasma mobile (strain ATCC 43663 / 163K / NCTC 11711) (Mesomycoplasma mobile), this protein is Uracil phosphoribosyltransferase.